Consider the following 409-residue polypeptide: uncharacterized protein (409 aa).

The N-terminal stretch at 1–26 is a signal peptide; the sequence is MKKELLASLVLCLSLSPLVSTNEVFA.

This is an uncharacterized protein from Bacillus subtilis (strain 168).